Here is an 88-residue protein sequence, read N- to C-terminus: UPF0250 protein Sbal_3280 (88 aa).

The protein belongs to the UPF0250 family.

The protein is UPF0250 protein Sbal_3280 of Shewanella baltica (strain OS155 / ATCC BAA-1091).